The following is a 185-amino-acid chain: Ribosome-recycling factor (185 aa).

Positions 140–168 are disordered; that stretch reads KKEQKDGNITEDEQRNLEKQVQKITDDST.

It belongs to the RRF family.

The protein localises to the cytoplasm. Functionally, responsible for the release of ribosomes from messenger RNA at the termination of protein biosynthesis. May increase the efficiency of translation by recycling ribosomes from one round of translation to another. This is Ribosome-recycling factor from Lactobacillus helveticus (strain DPC 4571).